Reading from the N-terminus, the 308-residue chain is Glucan 1,3-beta-glucosidase ARB_02797 (308 aa).

The signal sequence occupies residues 1 to 20 (MRFSTALSLALAVSPAAVFA). The active-site Proton donor is the E120. N-linked (GlcNAc...) asparagine glycosylation is present at N126. E220 (nucleophile) is an active-site residue.

This sequence belongs to the glycosyl hydrolase 17 family.

The protein localises to the secreted. The protein resides in the cell wall. It is found in the cytoplasm. It carries out the reaction Successive hydrolysis of beta-D-glucose units from the non-reducing ends of (1-&gt;3)-beta-D-glucans, releasing alpha-glucose.. Functionally, cell wall glucan 1,3-beta-glucosidase involved in cell wall biosynthesis and virulence. Crucial for delivery of beta-1,3-glucan to the biofilm matrix and for accumulation of mature matrix biomass. The protein is Glucan 1,3-beta-glucosidase ARB_02797 of Arthroderma benhamiae (strain ATCC MYA-4681 / CBS 112371) (Trichophyton mentagrophytes).